We begin with the raw amino-acid sequence, 265 residues long: Upstream stimulatory factor (265 aa).

Positions 1 to 18 (MDVQDHTLDQGPQDKDKD) are enriched in basic and acidic residues. 2 disordered regions span residues 1 to 21 (MDVQDHTLDQGPQDKDKDLEE) and 119 to 149 (ASAAIPGDGAGPASGGEQQPGITQPSGAAGG). Residues 134 to 144 (GEQQPGITQPS) show a composition bias toward polar residues. A bHLH domain is found at 190–245 (RRRATHNEVERRRRDKINNWIVKLSKIIPDCNIDHSKQGQSKGGILTKTCDYIHDL).

In terms of assembly, efficient DNA binding requires dimerization with another bHLH protein. Binds DNA as a homodimer or a heterodimer. Enriched in ectodermal tissue.

The protein localises to the nucleus. In terms of biological role, may act as a transcription factor which recognizes the CACGTG motif on SPEC gene promoters. In Strongylocentrotus purpuratus (Purple sea urchin), this protein is Upstream stimulatory factor.